The chain runs to 527 residues: Berberine bridge enzyme-like 5 (527 aa).

The signal sequence occupies residues 1-19; that stretch reads MKALFSVLCLVLLVSILRA. A disulfide bridge connects residues cysteine 32 and cysteine 95. 2 N-linked (GlcNAc...) asparagine glycosylation sites follow: asparagine 35 and asparagine 52. The FAD-binding PCMH-type domain maps to 73 to 247; the sequence is NYQKLVAIVA…LSWKINLVEV (175 aa). A cross-link (6-(S-cysteinyl)-8alpha-(pros-histidyl)-FAD (His-Cys)) is located at residues 110–172; the sequence is HDYEGLSYTS…QTLAFPAGVC (63 aa). Asparagine 341 is a glycosylation site (N-linked (GlcNAc...) asparagine).

Belongs to the oxygen-dependent FAD-linked oxidoreductase family. FAD serves as cofactor. Post-translationally, the FAD cofactor is bound via a bicovalent 6-S-cysteinyl, 8alpha-N1-histidyl FAD linkage.

Its subcellular location is the secreted. It is found in the cell wall. Its function is as follows. Probable flavin-dependent oxidoreductase. The polypeptide is Berberine bridge enzyme-like 5 (Arabidopsis thaliana (Mouse-ear cress)).